A 98-amino-acid polypeptide reads, in one-letter code: NADH-ubiquinone oxidoreductase chain 4L (98 aa).

The next 3 helical transmembrane spans lie at 1 to 21, 29 to 49, and 61 to 81; these read MSLV…GLLM, SLLC…LTIL, and IILL…LVMV.

The protein belongs to the complex I subunit 4L family. Core subunit of respiratory chain NADH dehydrogenase (Complex I) which is composed of 45 different subunits.

It is found in the mitochondrion inner membrane. It carries out the reaction a ubiquinone + NADH + 5 H(+)(in) = a ubiquinol + NAD(+) + 4 H(+)(out). In terms of biological role, core subunit of the mitochondrial membrane respiratory chain NADH dehydrogenase (Complex I) which catalyzes electron transfer from NADH through the respiratory chain, using ubiquinone as an electron acceptor. Part of the enzyme membrane arm which is embedded in the lipid bilayer and involved in proton translocation. The chain is NADH-ubiquinone oxidoreductase chain 4L (MT-ND4L) from Muntiacus vuquangensis (Giant muntjac).